We begin with the raw amino-acid sequence, 943 residues long: Protein translocase subunit SecA (943 aa).

Residues Q90, 108–112, and D509 each bind ATP; that span reads GEGKT. Positions 534–576 are disordered; that stretch reads KPDNEHKPPIPQQRSSKAGGGFASKSESISNKNSKSSGASLFP. The segment covering 556 to 570 has biased composition (low complexity); that stretch reads ASKSESISNKNSKSS.

The protein belongs to the SecA family. As to quaternary structure, monomer and homodimer. Part of the essential Sec protein translocation apparatus which comprises SecA, SecYEG and auxiliary proteins SecDF. Other proteins may also be involved.

The protein resides in the cell inner membrane. It localises to the cellular thylakoid membrane. It is found in the cytoplasm. It catalyses the reaction ATP + H2O + cellular proteinSide 1 = ADP + phosphate + cellular proteinSide 2.. Part of the Sec protein translocase complex. Interacts with the SecYEG preprotein conducting channel. Has a central role in coupling the hydrolysis of ATP to the transfer of proteins into and across the cell membrane, serving as an ATP-driven molecular motor driving the stepwise translocation of polypeptide chains across the membrane. In terms of biological role, probably participates in protein translocation into and across both the cytoplasmic and thylakoid membranes in cyanobacterial cells. In Prochlorococcus marinus (strain MIT 9515), this protein is Protein translocase subunit SecA.